Consider the following 143-residue polypeptide: Small ribosomal subunit protein uS12 (143 aa).

P62 is subject to Hydroxyproline.

It belongs to the universal ribosomal protein uS12 family. In terms of assembly, component of the 40S small ribosomal subunit.

The protein localises to the cytoplasm. It localises to the cytosol. The protein resides in the rough endoplasmic reticulum. The sequence is that of Small ribosomal subunit protein uS12 (rps-23) from Caenorhabditis elegans.